A 209-amino-acid chain; its full sequence is MKLLKLLSVAALSAASMMANAAGVDALSGLLKNVETFTANFTQTMRSQSGQVLQEVTGTLKAKRPGLFFWKTRAPLEQTIVTDGQQVWIYDPDLEQVTIQHLSQQLSNTPALLLSGEVGKIDEQYQVEQQPESQPGQVDFLLRPKGVDSLFDTLQLSFVNDQLVSMKLKDSLGQQTSLFFTAVSVNQTISEKAFHFEIPDGVDVIREAP.

A signal peptide spans 1–21 (MKLLKLLSVAALSAASMMANA).

It belongs to the LolA family. In terms of assembly, monomer.

The protein localises to the periplasm. Participates in the translocation of lipoproteins from the inner membrane to the outer membrane. Only forms a complex with a lipoprotein if the residue after the N-terminal Cys is not an aspartate (The Asp acts as a targeting signal to indicate that the lipoprotein should stay in the inner membrane). The protein is Outer-membrane lipoprotein carrier protein of Hahella chejuensis (strain KCTC 2396).